The sequence spans 969 residues: RNA polymerase-associated protein RapA (969 aa).

Positions 164-334 (EVGRRHAPRV…FARLRLLDSD (171 aa)) constitute a Helicase ATP-binding domain. 177-184 (DEVGLGKT) provides a ligand contact to ATP. The DEAH box motif lies at 280–283 (DEAH). The Helicase C-terminal domain maps to 492-668 (RVNWLLEKLK…GSNEALDDVI (177 aa)).

The protein belongs to the SNF2/RAD54 helicase family. RapA subfamily. As to quaternary structure, interacts with the RNAP. Has a higher affinity for the core RNAP than for the holoenzyme. Its ATPase activity is stimulated by binding to RNAP.

Its function is as follows. Transcription regulator that activates transcription by stimulating RNA polymerase (RNAP) recycling in case of stress conditions such as supercoiled DNA or high salt concentrations. Probably acts by releasing the RNAP, when it is trapped or immobilized on tightly supercoiled DNA. Does not activate transcription on linear DNA. Probably not involved in DNA repair. This chain is RNA polymerase-associated protein RapA, found in Vibrio vulnificus (strain CMCP6).